A 961-amino-acid chain; its full sequence is Probable inorganic carbon transporter subunit DabA (961 aa).

Positions 406, 408, 653, and 668 each coordinate Zn(2+).

This sequence belongs to the inorganic carbon transporter (TC 9.A.2) DabA family. As to quaternary structure, forms a complex with DabB. Zn(2+) is required as a cofactor.

It localises to the cell inner membrane. Part of an energy-coupled inorganic carbon pump. The protein is Probable inorganic carbon transporter subunit DabA of Hydrogenobaculum sp. (strain Y04AAS1).